A 340-amino-acid polypeptide reads, in one-letter code: Maltose epimerase (340 aa).

Arginine 79 contacts substrate. Histidine 178 acts as the Proton donor in catalysis. Aspartate 247 lines the substrate pocket. Glutamate 305 acts as the Proton acceptor in catalysis.

Belongs to the aldose epimerase family.

The enzyme catalyses alpha-maltose = beta-maltose. It functions in the pathway carbohydrate metabolism; hexose metabolism. Functionally, catalyzes the interconversion of alpha and beta anomers of maltose. The sequence is that of Maltose epimerase from Levilactobacillus brevis (strain ATCC 367 / BCRC 12310 / CIP 105137 / JCM 1170 / LMG 11437 / NCIMB 947 / NCTC 947) (Lactobacillus brevis).